A 232-amino-acid polypeptide reads, in one-letter code: Ornithine carbamoyltransferase (232 aa).

Carbamoyl phosphate contacts are provided by residues glutamine 15, arginine 39, and 66–69 (HPTQ). L-ornithine is bound by residues asparagine 99, aspartate 163, and 167–168 (SM). Residues 204–207 (HCLP) and threonine 232 contribute to the carbamoyl phosphate site.

The protein belongs to the aspartate/ornithine carbamoyltransferase superfamily. OTCase family.

It localises to the cytoplasm. The enzyme catalyses carbamoyl phosphate + L-ornithine = L-citrulline + phosphate + H(+). Its pathway is amino-acid biosynthesis; L-arginine biosynthesis; L-arginine from L-ornithine and carbamoyl phosphate: step 1/3. Its function is as follows. Reversibly catalyzes the transfer of the carbamoyl group from carbamoyl phosphate (CP) to the N(epsilon) atom of ornithine (ORN) to produce L-citrulline. This Neisseria subflava protein is Ornithine carbamoyltransferase (argF).